Reading from the N-terminus, the 91-residue chain is Metalloproteinase inhibitor 2 (91 aa).

An NTR domain is found at 1 to 91 (KAVSEKEVDS…FIVPWDTLST (91 aa)).

This sequence belongs to the protease inhibitor I35 (TIMP) family. In terms of processing, the activity of TIMP2 is dependent on the presence of disulfide bonds.

It localises to the secreted. Complexes with metalloproteinases (such as collagenases) and irreversibly inactivates them. The sequence is that of Metalloproteinase inhibitor 2 (TIMP2) from Equus caballus (Horse).